The chain runs to 294 residues: Shikimate dehydrogenase (NADP(+)) (294 aa).

Shikimate contacts are provided by residues Ser25 to Ser27 and Thr72. The Proton acceptor role is filled by Lys76. Shikimate-binding residues include Asn97 and Asp112. Residues Gly136 to Ala140 and Thr234 contribute to the NADP(+) site. A shikimate-binding site is contributed by Tyr236. Residue Gly257 participates in NADP(+) binding.

This sequence belongs to the shikimate dehydrogenase family. Homodimer.

It catalyses the reaction shikimate + NADP(+) = 3-dehydroshikimate + NADPH + H(+). The protein operates within metabolic intermediate biosynthesis; chorismate biosynthesis; chorismate from D-erythrose 4-phosphate and phosphoenolpyruvate: step 4/7. Involved in the biosynthesis of the chorismate, which leads to the biosynthesis of aromatic amino acids. Catalyzes the reversible NADPH linked reduction of 3-dehydroshikimate (DHSA) to yield shikimate (SA). The sequence is that of Shikimate dehydrogenase (NADP(+)) from Symbiobacterium thermophilum (strain DSM 24528 / JCM 14929 / IAM 14863 / T).